The chain runs to 165 residues: MGNLFKIGQIINTHGIKGEVKVYPLTEDVNKFKRLETVLVGGEEKKILGVKFQKDRVILKIEGIDSMNDAETYKQKYIEIPRENEPELPPDTYYVSDLKECTIYDTNEKEIGRIFDVISTPNNDVYWIKEPKELLIPVLRDIVLDIDIKLKKIIIKPVGEWQDED.

The PRC barrel domain occupies 90–161 (PDTYYVSDLK…KIIIKPVGEW (72 aa)).

The protein belongs to the RimM family. As to quaternary structure, binds ribosomal protein uS19.

Its subcellular location is the cytoplasm. In terms of biological role, an accessory protein needed during the final step in the assembly of 30S ribosomal subunit, possibly for assembly of the head region. Essential for efficient processing of 16S rRNA. May be needed both before and after RbfA during the maturation of 16S rRNA. It has affinity for free ribosomal 30S subunits but not for 70S ribosomes. This is Ribosome maturation factor RimM from Clostridium beijerinckii (strain ATCC 51743 / NCIMB 8052) (Clostridium acetobutylicum).